Here is a 364-residue protein sequence, read N- to C-terminus: Anthranilate phosphoribosyltransferase (364 aa).

Residues Gly-101, 104–105, Thr-109, 111–114, 129–137, and Gly-141 each bind 5-phospho-alpha-D-ribose 1-diphosphate; these read GD, NLST, and KHGNRAASS. Position 101 (Gly-101) interacts with anthranilate. Ser-113 serves as a coordination point for Mg(2+). Asn-132 serves as a coordination point for anthranilate. Anthranilate is bound at residue Arg-187. Asp-245 and Glu-246 together coordinate Mg(2+).

The protein belongs to the anthranilate phosphoribosyltransferase family. In terms of assembly, homodimer. Mg(2+) serves as cofactor.

It catalyses the reaction N-(5-phospho-beta-D-ribosyl)anthranilate + diphosphate = 5-phospho-alpha-D-ribose 1-diphosphate + anthranilate. It functions in the pathway amino-acid biosynthesis; L-tryptophan biosynthesis; L-tryptophan from chorismate: step 2/5. In terms of biological role, catalyzes the transfer of the phosphoribosyl group of 5-phosphorylribose-1-pyrophosphate (PRPP) to anthranilate to yield N-(5'-phosphoribosyl)-anthranilate (PRA). The protein is Anthranilate phosphoribosyltransferase of Mycolicibacterium gilvum (strain PYR-GCK) (Mycobacterium gilvum (strain PYR-GCK)).